Consider the following 211-residue polypeptide: Protein-L-isoaspartate O-methyltransferase (211 aa).

Ser-62 is a catalytic residue.

It belongs to the methyltransferase superfamily. L-isoaspartyl/D-aspartyl protein methyltransferase family.

It localises to the cytoplasm. It catalyses the reaction [protein]-L-isoaspartate + S-adenosyl-L-methionine = [protein]-L-isoaspartate alpha-methyl ester + S-adenosyl-L-homocysteine. In terms of biological role, catalyzes the methyl esterification of L-isoaspartyl residues in peptides and proteins that result from spontaneous decomposition of normal L-aspartyl and L-asparaginyl residues. It plays a role in the repair and/or degradation of damaged proteins. The chain is Protein-L-isoaspartate O-methyltransferase from Shewanella woodyi (strain ATCC 51908 / MS32).